A 1164-amino-acid polypeptide reads, in one-letter code: DNA-directed RNA polymerase 133 kDa polypeptide (1164 aa).

Belongs to the RNA polymerase beta chain family. The DNA-dependent RNA polymerase used for intermediate and late genes expression consists of eight subunits 147 kDa, 133 kDa, 35 kDa, 30 kDa, 22 kDa, 19 kDa, 18 kDa and 7 kDa totalling more than 500 kDa in mass. The same holoenzyme, with the addition of the transcription-specificity factor RAP94, is used for early gene expression.

Its subcellular location is the virion. It carries out the reaction RNA(n) + a ribonucleoside 5'-triphosphate = RNA(n+1) + diphosphate. Part of the DNA-dependent RNA polymerase which catalyzes the transcription of viral DNA into RNA using the four ribonucleoside triphosphates as substrates. Responsible for the transcription of early, intermediate and late genes. DNA-dependent RNA polymerase associates with the early transcription factor (ETF), itself composed of D6 and A7, thereby allowing the early genes transcription. Late transcription, and probably also intermediate transcription, require newly synthesized RNA polymerase. In Homo sapiens (Human), this protein is DNA-directed RNA polymerase 133 kDa polypeptide (RPO132).